Reading from the N-terminus, the 494-residue chain is Ketol-acid reductoisomerase (NADP(+)) (494 aa).

Residues 14-208 enclose the KARI N-terminal Rossmann domain; sequence LDQLGRCRFM…GGHRAGCLES (195 aa). NADP(+) contacts are provided by residues 45 to 48, R68, R76, S78, and 108 to 110; these read CGAQ and DKQ. The active site involves H132. Residue G158 coordinates NADP(+). 2 KARI C-terminal knotted domains span residues 209-344 and 345-487; these read SFVA…NYPD and SSLE…MTDM. Mg(2+) is bound by residues D217, E221, E389, and E393. Residue S414 participates in substrate binding.

The protein belongs to the ketol-acid reductoisomerase family. The cofactor is Mg(2+).

The enzyme catalyses (2R)-2,3-dihydroxy-3-methylbutanoate + NADP(+) = (2S)-2-acetolactate + NADPH + H(+). The catalysed reaction is (2R,3R)-2,3-dihydroxy-3-methylpentanoate + NADP(+) = (S)-2-ethyl-2-hydroxy-3-oxobutanoate + NADPH + H(+). The protein operates within amino-acid biosynthesis; L-isoleucine biosynthesis; L-isoleucine from 2-oxobutanoate: step 2/4. It functions in the pathway amino-acid biosynthesis; L-valine biosynthesis; L-valine from pyruvate: step 2/4. Functionally, involved in the biosynthesis of branched-chain amino acids (BCAA). Catalyzes an alkyl-migration followed by a ketol-acid reduction of (S)-2-acetolactate (S2AL) to yield (R)-2,3-dihydroxy-isovalerate. In the isomerase reaction, S2AL is rearranged via a Mg-dependent methyl migration to produce 3-hydroxy-3-methyl-2-ketobutyrate (HMKB). In the reductase reaction, this 2-ketoacid undergoes a metal-dependent reduction by NADPH to yield (R)-2,3-dihydroxy-isovalerate. The sequence is that of Ketol-acid reductoisomerase (NADP(+)) from Aliivibrio salmonicida (strain LFI1238) (Vibrio salmonicida (strain LFI1238)).